Reading from the N-terminus, the 27-residue chain is Putative phosphoglycerate kinase (27 aa).

Belongs to the phosphoglycerate kinase family. Monomer. It depends on Mg(2+) as a cofactor.

The enzyme catalyses (2R)-3-phosphoglycerate + ATP = (2R)-3-phospho-glyceroyl phosphate + ADP. The protein is Putative phosphoglycerate kinase of Pinus strobus (Eastern white pine).